The following is a 298-amino-acid chain: Sulfate adenylyltransferase subunit 2 (298 aa).

Composition is skewed to basic and acidic residues over residues 272–282 and 289–298; these read RTSERQGRLID and MEKKKQEGYF. Residues 272–298 form a disordered region; the sequence is RTSERQGRLIDSDSAGSMEKKKQEGYF.

This sequence belongs to the PAPS reductase family. CysD subfamily. Heterodimer composed of CysD, the smaller subunit, and CysN.

The catalysed reaction is sulfate + ATP + H(+) = adenosine 5'-phosphosulfate + diphosphate. It functions in the pathway sulfur metabolism; hydrogen sulfide biosynthesis; sulfite from sulfate: step 1/3. Functionally, with CysN forms the ATP sulfurylase (ATPS) that catalyzes the adenylation of sulfate producing adenosine 5'-phosphosulfate (APS) and diphosphate, the first enzymatic step in sulfur assimilation pathway. APS synthesis involves the formation of a high-energy phosphoric-sulfuric acid anhydride bond driven by GTP hydrolysis by CysN coupled to ATP hydrolysis by CysD. The sequence is that of Sulfate adenylyltransferase subunit 2 from Burkholderia lata (strain ATCC 17760 / DSM 23089 / LMG 22485 / NCIMB 9086 / R18194 / 383).